The primary structure comprises 292 residues: MFEGSITALVTPFADDRIDEVALHDLVEWQIEEGSFGLVPCGTTGESPTLSKSEHEQVVEITIKTANGRVPVIAGAGSNSTAEAIAFVRHAQNAGADGVLIVSPYYNKPTQEGIYQHFKAIDAASTIPIIVYNIPGRSAIEIHVETLARIFEDCPNVKGVKDATGNLLRPSLERMACGEDFNLLTGEDGTALGYMAHGGHGCISVTANVAPALCADFQQACLNGDFAAALKLQDRLMPLHRALFLETNPAGAKYALQRLGRMRGDLRLPLVTISPSFQEEIDDAMRHAGILL.

Pyruvate is bound at residue Thr-44. Tyr-132 (proton donor/acceptor) is an active-site residue. Lys-161 acts as the Schiff-base intermediate with substrate in catalysis. Ile-203 is a pyruvate binding site.

This sequence belongs to the DapA family. As to quaternary structure, homotetramer.

It is found in the cytoplasm. It catalyses the reaction L-aspartate 4-semialdehyde + pyruvate = (2S,4S)-4-hydroxy-2,3,4,5-tetrahydrodipicolinate + H2O + H(+). Its pathway is amino-acid biosynthesis; L-lysine biosynthesis via DAP pathway; (S)-tetrahydrodipicolinate from L-aspartate: step 3/4. Its activity is regulated as follows. Is feedback inhibited by lysine. Is competitively inhibited by 2-oxobutyrate with respect to pyruvate. Catalyzes the condensation of (S)-aspartate-beta-semialdehyde [(S)-ASA] and pyruvate to 4-hydroxy-tetrahydrodipicolinate (HTPA). This Rhizobium meliloti (Ensifer meliloti) protein is 4-hydroxy-tetrahydrodipicolinate synthase.